The chain runs to 296 residues: NAD kinase (296 aa).

Residue Asp-73 is the Proton acceptor of the active site. Residues 73–74 (DG), Lys-78, 151–152 (NE), Arg-178, Asp-180, and 191–196 (TAHAMS) contribute to the NAD(+) site.

The protein belongs to the NAD kinase family. A divalent metal cation is required as a cofactor.

Its subcellular location is the cytoplasm. It carries out the reaction NAD(+) + ATP = ADP + NADP(+) + H(+). In terms of biological role, involved in the regulation of the intracellular balance of NAD and NADP, and is a key enzyme in the biosynthesis of NADP. Catalyzes specifically the phosphorylation on 2'-hydroxyl of the adenosine moiety of NAD to yield NADP. This is NAD kinase from Francisella tularensis subsp. mediasiatica (strain FSC147).